Reading from the N-terminus, the 208-residue chain is Thymidylate kinase (208 aa).

10–17 (GPDGSGKT) contacts ATP.

The protein belongs to the thymidylate kinase family.

It catalyses the reaction dTMP + ATP = dTDP + ADP. Phosphorylation of dTMP to form dTDP in both de novo and salvage pathways of dTTP synthesis. In Listeria monocytogenes serotype 4a (strain HCC23), this protein is Thymidylate kinase.